The primary structure comprises 336 residues: F420-dependent glucose-6-phosphate dehydrogenase (336 aa).

Aspartate 39 lines the coenzyme F420-(gamma-Glu)n pocket. Histidine 40 acts as the Proton donor in catalysis. Residues threonine 76 and 107-108 each bind coenzyme F420-(gamma-Glu)n; that span reads TG. The active-site Proton acceptor is glutamate 109. Coenzyme F420-(gamma-Glu)n-binding positions include asparagine 112, 177–178, and 180–181; these read GG and VV. Substrate contacts are provided by threonine 195, lysine 198, lysine 259, and arginine 283.

This sequence belongs to the F420-dependent glucose-6-phosphate dehydrogenase family. As to quaternary structure, homodimer.

It carries out the reaction oxidized coenzyme F420-(gamma-L-Glu)(n) + D-glucose 6-phosphate + H(+) = 6-phospho-D-glucono-1,5-lactone + reduced coenzyme F420-(gamma-L-Glu)(n). Its function is as follows. Catalyzes the coenzyme F420-dependent oxidation of glucose 6-phosphate (G6P) to 6-phosphogluconolactone. Appears to have a role in resistance to oxidative stress, via its consumption of G6P that serves as a source of reducing power to combat oxidative stress in mycobacteria. Cannot use NAD, NADP, FAD or FMN instead of coenzyme F420 as an electron acceptor. Exhibits nearly no activity with D-mannose-6-phosphate or D-fructose-6-phosphate as substrate. The protein is F420-dependent glucose-6-phosphate dehydrogenase (fgd) of Mycolicibacterium smegmatis (strain ATCC 700084 / mc(2)155) (Mycobacterium smegmatis).